Consider the following 211-residue polypeptide: Small ribosomal subunit protein bS6c alpha (211 aa).

Over residues 1-19 (MATFSLTSTLPSSSPTTSL) the composition is skewed to low complexity. Disordered regions lie at residues 1 to 25 (MATFSLTSTLPSSSPTTSLHSIPKP) and 80 to 100 (DEDPPSTPPAGLAVEEKPEPQ). Residues 1–65 (MATFSLTSTL…YGPYVKAIAL (65 aa)) constitute a chloroplast transit peptide.

The protein belongs to the bacterial ribosomal protein bS6 family. In terms of assembly, component of the chloroplast small ribosomal subunit (SSU). Mature 70S chloroplast ribosomes of higher plants consist of a small (30S) and a large (50S) subunit. The 30S small subunit contains 1 molecule of ribosomal RNA (16S rRNA) and 24 different proteins. The 50S large subunit contains 3 rRNA molecules (23S, 5S and 4.5S rRNA) and 33 different proteins.

It localises to the plastid. The protein localises to the chloroplast. Functionally, component of the chloroplast ribosome (chloro-ribosome), a dedicated translation machinery responsible for the synthesis of chloroplast genome-encoded proteins, including proteins of the transcription and translation machinery and components of the photosynthetic apparatus. This is Small ribosomal subunit protein bS6c alpha (RPS6) from Spinacia oleracea (Spinach).